The chain runs to 246 residues: tRNA pseudouridine synthase A (246 aa).

Residue Asp-52 is the Nucleophile of the active site. Residue Tyr-111 coordinates substrate.

This sequence belongs to the tRNA pseudouridine synthase TruA family. In terms of assembly, homodimer.

It carries out the reaction uridine(38/39/40) in tRNA = pseudouridine(38/39/40) in tRNA. Formation of pseudouridine at positions 38, 39 and 40 in the anticodon stem and loop of transfer RNAs. This Ehrlichia ruminantium (strain Gardel) protein is tRNA pseudouridine synthase A.